A 356-amino-acid chain; its full sequence is Protein-glutamate methylesterase/protein-glutamine glutaminase (356 aa).

Residues 4-121 (KVLIVDDSAL…QSGMLEYTDL (118 aa)) form the Response regulatory domain. Residue D55 is modified to 4-aspartylphosphate. The CheB-type methylesterase domain maps to 156-349 (PLTSSEKLII…RRVLEFFAAH (194 aa)). Active-site residues include S169, H195, and D291.

It belongs to the CheB family. Post-translationally, phosphorylated by CheA. Phosphorylation of the N-terminal regulatory domain activates the methylesterase activity.

It localises to the cytoplasm. It catalyses the reaction [protein]-L-glutamate 5-O-methyl ester + H2O = L-glutamyl-[protein] + methanol + H(+). It carries out the reaction L-glutaminyl-[protein] + H2O = L-glutamyl-[protein] + NH4(+). In terms of biological role, involved in chemotaxis. Part of a chemotaxis signal transduction system that modulates chemotaxis in response to various stimuli. Catalyzes the demethylation of specific methylglutamate residues introduced into the chemoreceptors (methyl-accepting chemotaxis proteins or MCP) by CheR. Also mediates the irreversible deamidation of specific glutamine residues to glutamic acid. The polypeptide is Protein-glutamate methylesterase/protein-glutamine glutaminase (Thiobacillus denitrificans (strain ATCC 25259 / T1)).